The chain runs to 946 residues: Protein dct-6 (946 aa).

A coiled-coil region spans residues 326-363 (YMDMNDQIEQMIALLVDQLEELEKLEQLCDEVQKTGNQ).

May have a role in tumor suppression. The chain is Protein dct-6 from Caenorhabditis briggsae.